The sequence spans 130 residues: Fluoride-specific ion channel FluC (130 aa).

The next 4 membrane-spanning stretches (helical) occupy residues 2–22 (GLLL…RFAL), 35–55 (IGIL…AAFL), 72–92 (LFVT…LDIL), and 107–127 (ILVS…FIMG). 2 residues coordinate Na(+): Gly-79 and Thr-82.

Belongs to the fluoride channel Fluc/FEX (TC 1.A.43) family.

It localises to the cell inner membrane. It catalyses the reaction fluoride(in) = fluoride(out). Its activity is regulated as follows. Na(+) is not transported, but it plays an essential structural role and its presence is essential for fluoride channel function. Fluoride-specific ion channel. Important for reducing fluoride concentration in the cell, thus reducing its toxicity. The sequence is that of Fluoride-specific ion channel FluC from Francisella philomiragia subsp. philomiragia (strain ATCC 25017 / CCUG 19701 / FSC 153 / O#319-036).